Here is a 61-residue protein sequence, read N- to C-terminus: Small ribosomal subunit protein uS14 (61 aa).

Cys24, Cys27, Cys40, and Cys43 together coordinate Zn(2+).

This sequence belongs to the universal ribosomal protein uS14 family. Zinc-binding uS14 subfamily. As to quaternary structure, part of the 30S ribosomal subunit. Contacts proteins S3 and S10. The cofactor is Zn(2+).

In terms of biological role, binds 16S rRNA, required for the assembly of 30S particles and may also be responsible for determining the conformation of the 16S rRNA at the A site. The sequence is that of Small ribosomal subunit protein uS14 from Acidithiobacillus ferrooxidans (strain ATCC 23270 / DSM 14882 / CIP 104768 / NCIMB 8455) (Ferrobacillus ferrooxidans (strain ATCC 23270)).